The sequence spans 194 residues: dTTP/UTP pyrophosphatase (194 aa).

The active-site Proton acceptor is the D69.

The protein belongs to the Maf family. YhdE subfamily. The cofactor is a divalent metal cation.

It is found in the cytoplasm. The catalysed reaction is dTTP + H2O = dTMP + diphosphate + H(+). It catalyses the reaction UTP + H2O = UMP + diphosphate + H(+). Its function is as follows. Nucleoside triphosphate pyrophosphatase that hydrolyzes dTTP and UTP. May have a dual role in cell division arrest and in preventing the incorporation of modified nucleotides into cellular nucleic acids. This Moorella thermoacetica (strain ATCC 39073 / JCM 9320) protein is dTTP/UTP pyrophosphatase.